The following is a 673-amino-acid chain: UvrABC system protein B (673 aa).

The 158-residue stretch at 26 to 183 (EGLEDGLAHQ…RRLAELQYTR (158 aa)) folds into the Helicase ATP-binding domain. 39-46 (GVTGSGKT) is an ATP binding site. The Beta-hairpin motif lies at 92–115 (YYDYYQPEAYVPSSDTFIEKDASV). Residues 431 to 597 (QVDDLLSEIR…GLNKKVVDIL (167 aa)) form the Helicase C-terminal domain. Residues 633-668 (QQKIHELEGQMMQHAQNLEFEEAAQIRDQLHQLREL) form the UVR domain.

This sequence belongs to the UvrB family. As to quaternary structure, forms a heterotetramer with UvrA during the search for lesions. Interacts with UvrC in an incision complex.

Its subcellular location is the cytoplasm. Its function is as follows. The UvrABC repair system catalyzes the recognition and processing of DNA lesions. A damage recognition complex composed of 2 UvrA and 2 UvrB subunits scans DNA for abnormalities. Upon binding of the UvrA(2)B(2) complex to a putative damaged site, the DNA wraps around one UvrB monomer. DNA wrap is dependent on ATP binding by UvrB and probably causes local melting of the DNA helix, facilitating insertion of UvrB beta-hairpin between the DNA strands. Then UvrB probes one DNA strand for the presence of a lesion. If a lesion is found the UvrA subunits dissociate and the UvrB-DNA preincision complex is formed. This complex is subsequently bound by UvrC and the second UvrB is released. If no lesion is found, the DNA wraps around the other UvrB subunit that will check the other stand for damage. This Salmonella arizonae (strain ATCC BAA-731 / CDC346-86 / RSK2980) protein is UvrABC system protein B.